Reading from the N-terminus, the 510-residue chain is ATP synthase subunit alpha (510 aa).

169–176 (GDRQTGKT) serves as a coordination point for ATP.

The protein belongs to the ATPase alpha/beta chains family. F-type ATPases have 2 components, CF(1) - the catalytic core - and CF(0) - the membrane proton channel. CF(1) has five subunits: alpha(3), beta(3), gamma(1), delta(1), epsilon(1). CF(0) has four main subunits: a(1), b(1), b'(1) and c(9-12).

Its subcellular location is the cell inner membrane. The enzyme catalyses ATP + H2O + 4 H(+)(in) = ADP + phosphate + 5 H(+)(out). In terms of biological role, produces ATP from ADP in the presence of a proton gradient across the membrane. The alpha chain is a regulatory subunit. The chain is ATP synthase subunit alpha from Rhodopseudomonas palustris (strain BisA53).